The primary structure comprises 296 residues: Cytidine deaminase (296 aa).

CMP/dCMP-type deaminase domains follow at residues 47–167 (ELNE…FGPS) and 186–296 (DSND…VEPE). 88 to 90 (NIE) is a substrate binding site. H101 is a Zn(2+) binding site. E103 acts as the Proton donor in catalysis. Zn(2+)-binding residues include C128 and C131.

The protein belongs to the cytidine and deoxycytidylate deaminase family. Homodimer. Zn(2+) is required as a cofactor.

It catalyses the reaction cytidine + H2O + H(+) = uridine + NH4(+). It carries out the reaction 2'-deoxycytidine + H2O + H(+) = 2'-deoxyuridine + NH4(+). Functionally, this enzyme scavenges exogenous and endogenous cytidine and 2'-deoxycytidine for UMP synthesis. The protein is Cytidine deaminase of Shewanella halifaxensis (strain HAW-EB4).